The primary structure comprises 294 residues: C-type lectin domain family 4 member G (294 aa).

At 1–30 (MNTGEYNKLGSAIEEVSRGQLGRWECYKQR) the chain is on the cytoplasmic side. The chain crosses the membrane as a helical; Signal-anchor for type II membrane protein span at residues 31–51 (LFFLVLALLVATVLWALILST). The Extracellular portion of the chain corresponds to 52-294 (LLSSASSKLR…WICEKRSSCY (243 aa)). N-linked (GlcNAc...) asparagine glycosylation occurs at N73. Residues 100–151 (AQLQTTLAEFKDIQAKLMEQESILKELQERVTQDLAKASRDRENIRSELFQA) are a coiled coil. N-linked (GlcNAc...) asparagine glycosylation is found at N159, N246, and N256. The region spanning 172 to 287 (FQGSCYYFSE…CTNERDGWIC (116 aa)) is the C-type lectin domain. An intrachain disulfide couples C264 to C278.

The protein resides in the cell membrane. Functionally, binds mannose, N-acetylglucosamine (GlcNAc) and fucose, but not galactose, in a Ca(2+)-dependent manner. The polypeptide is C-type lectin domain family 4 member G (Clec4g) (Mus musculus (Mouse)).